The primary structure comprises 515 residues: 1-pyrroline-5-carboxylate dehydrogenase (515 aa).

Residues Glu-286 and Cys-320 contribute to the active site.

The protein belongs to the aldehyde dehydrogenase family. RocA subfamily.

The enzyme catalyses L-glutamate 5-semialdehyde + NAD(+) + H2O = L-glutamate + NADH + 2 H(+). The protein operates within amino-acid degradation; L-proline degradation into L-glutamate; L-glutamate from L-proline: step 2/2. This Bacillus mycoides (strain KBAB4) (Bacillus weihenstephanensis) protein is 1-pyrroline-5-carboxylate dehydrogenase.